Consider the following 436-residue polypeptide: NADH-quinone oxidoreductase subunit D 1 (436 aa).

Belongs to the complex I 49 kDa subunit family. NDH-1 is composed of 14 different subunits. Subunits NuoB, C, D, E, F, and G constitute the peripheral sector of the complex.

It is found in the cell inner membrane. It catalyses the reaction a quinone + NADH + 5 H(+)(in) = a quinol + NAD(+) + 4 H(+)(out). NDH-1 shuttles electrons from NADH, via FMN and iron-sulfur (Fe-S) centers, to quinones in the respiratory chain. The immediate electron acceptor for the enzyme in this species is believed to be ubiquinone. Couples the redox reaction to proton translocation (for every two electrons transferred, four hydrogen ions are translocated across the cytoplasmic membrane), and thus conserves the redox energy in a proton gradient. The sequence is that of NADH-quinone oxidoreductase subunit D 1 from Stenotrophomonas maltophilia (strain R551-3).